The sequence spans 236 residues: 5'-methylthioadenosine/S-adenosylhomocysteine nucleosidase (236 aa).

The Proton acceptor role is filled by Glu12. Substrate-binding positions include Gly78, Ile153, and 174 to 175 (ME). Asp198 serves as the catalytic Proton donor.

Belongs to the PNP/UDP phosphorylase family. MtnN subfamily.

The enzyme catalyses S-adenosyl-L-homocysteine + H2O = S-(5-deoxy-D-ribos-5-yl)-L-homocysteine + adenine. It catalyses the reaction S-methyl-5'-thioadenosine + H2O = 5-(methylsulfanyl)-D-ribose + adenine. The catalysed reaction is 5'-deoxyadenosine + H2O = 5-deoxy-D-ribose + adenine. It functions in the pathway amino-acid biosynthesis; L-methionine biosynthesis via salvage pathway; S-methyl-5-thio-alpha-D-ribose 1-phosphate from S-methyl-5'-thioadenosine (hydrolase route): step 1/2. Catalyzes the irreversible cleavage of the glycosidic bond in both 5'-methylthioadenosine (MTA) and S-adenosylhomocysteine (SAH/AdoHcy) to adenine and the corresponding thioribose, 5'-methylthioribose and S-ribosylhomocysteine, respectively. Also cleaves 5'-deoxyadenosine, a toxic by-product of radical S-adenosylmethionine (SAM) enzymes, into 5-deoxyribose and adenine. The protein is 5'-methylthioadenosine/S-adenosylhomocysteine nucleosidase of Shewanella baltica (strain OS155 / ATCC BAA-1091).